Reading from the N-terminus, the 6359-residue chain is Bacitracin synthase 3 (6359 aa).

A domain 1 (isoleucine-activating) region spans residues 461 to 1034 (LHELFEEQAM…IKGLGEYIRS (574 aa)). A compositionally biased stretch (basic and acidic residues) spans 941-953 (VDRKALPEPDRTA). Residues 941 to 962 (VDRKALPEPDRTAGAENEYEAP) form a disordered region. 5 Carrier domains span residues 961–1036 (APRN…RSTK), 1993–2067 (APRN…KKQS), 3497–3572 (APRN…ESMK), 4539–4613 (PPRN…KAES), and 6047–6122 (PPRH…KHAQ). 3 positions are modified to O-(pantetheine 4'-phosphoryl)serine: serine 996, serine 2028, and serine 3532. The segment at 1517 to 2064 (FEDQTLTYRQ…RIKDLAKYVK (548 aa)) is domain 2 (D-phenylalanine-activating). Residues 2999 to 3570 (NKTIHQLFEE…IKDIGDFIES (572 aa)) form a domain 3 (histidine-activating) region. Residues 4047–4612 (EQTAVVYADE…KSLSRYVKAE (566 aa)) form a domain 4 (D-aspartic acid-activating) region. Positions 4521–4544 (IDTAALPEPQPGKETEYEPPRNET) are disordered. Residues 4531 to 4544 (PGKETEYEPPRNET) show a composition bias toward basic and acidic residues. Residues serine 4574 and serine 6082 each carry the O-(pantetheine 4'-phosphoryl)serine modification. Residues 5549–6129 (IHRLFEEQAE…HAQDLLKDYT (581 aa)) are domain 5 (asparagine-activating).

Belongs to the ATP-dependent AMP-binding enzyme family. As to quaternary structure, large multienzyme complex of BA1, BA2 and BA3. It depends on pantetheine 4'-phosphate as a cofactor.

It carries out the reaction L-aspartate = D-aspartate. The catalysed reaction is L-phenylalanine + ATP + H2O = D-phenylalanine + AMP + diphosphate + H(+). The protein operates within antibiotic biosynthesis; bacitracin biosynthesis. In terms of biological role, induces peptide synthesis, activates and incorporates five amino acids, forms a thiazoline ring between the first two amino acids and incorporates a D-glutamine in the fourth position. This Bacillus licheniformis protein is Bacitracin synthase 3 (bacC).